We begin with the raw amino-acid sequence, 275 residues long: UDP-Gal:alpha-D-GlcNAc-diphosphoundecaprenol beta-1,3-galactosyltransferase (275 aa).

The protein belongs to the glycosyltransferase 2 family. The cofactor is Mn(2+).

The protein localises to the cell inner membrane. The enzyme catalyses N-acetyl-alpha-D-glucosaminyl-di-trans,octa-cis-undecaprenyl diphosphate + UDP-alpha-D-galactose = beta-D-Gal-(1-&gt;3)-alpha-D-GlcNAc-di-trans,octa-cis-undecaprenyl diphosphate + UDP + H(+). The protein operates within bacterial outer membrane biogenesis; LPS O-antigen biosynthesis. In terms of biological role, catalyzes the addition of Gal, the second sugar moiety of the O7-antigen repeating unit, to GlcNAc-pyrophosphate-undecaprenol. The polypeptide is UDP-Gal:alpha-D-GlcNAc-diphosphoundecaprenol beta-1,3-galactosyltransferase (wbbD) (Escherichia coli).